Consider the following 514-residue polypeptide: 2,3-bisphosphoglycerate-independent phosphoglycerate mutase (514 aa).

2 residues coordinate Mn(2+): aspartate 14 and serine 64. Serine 64 (phosphoserine intermediate) is an active-site residue. Residues histidine 125, 155–156 (RD), arginine 187, arginine 193, 263–266 (RADR), and lysine 336 contribute to the substrate site. Residues aspartate 403, histidine 407, aspartate 444, histidine 445, and histidine 463 each coordinate Mn(2+).

The protein belongs to the BPG-independent phosphoglycerate mutase family. In terms of assembly, monomer. Mn(2+) is required as a cofactor.

The catalysed reaction is (2R)-2-phosphoglycerate = (2R)-3-phosphoglycerate. It functions in the pathway carbohydrate degradation; glycolysis; pyruvate from D-glyceraldehyde 3-phosphate: step 3/5. Its activity is regulated as follows. Insensitive to vanadate. Its function is as follows. Catalyzes the interconversion of 2-phosphoglycerate (2-PGA) and 3-phosphoglycerate (3-PGA). The chain is 2,3-bisphosphoglycerate-independent phosphoglycerate mutase from Escherichia coli (strain K12).